Reading from the N-terminus, the 669-residue chain is Leucine zipper putative tumor suppressor 2 (669 aa).

Positions 1-25 are enriched in low complexity; sequence MAIVQTLPVPLEPAPEAATAPQAPV. 4 disordered regions span residues 1–56, 92–131, 150–201, and 215–323; these read MAIV…PTFF, NEDF…IPVS, PVLP…AADK, and GTLS…SDEA. Residues 1-332 form a required for centrosomal localization region; the sequence is MAIVQTLPVP…ALLHCVLEGK (332 aa). Residues 172–181 show a composition bias toward polar residues; sequence LSGSQGSLTQ. Residues 187–199 are compositionally biased toward low complexity; that stretch reads ASSSSSSSSSSAA. Polar residues predominate over residues 215 to 233; the sequence is GTLSDSGRNSLSSLPTYST. Low complexity-rich tracts occupy residues 241–251 and 267–283; these read SSPGGHLPSHG and GPSH…KSTG. Phosphoserine is present on Ser-249. Residues 284–295 are compositionally biased toward gly residues; that stretch reads SLGGRVAGGLLG. Residue Ser-296 is modified to Phosphoserine. Polar residues predominate over residues 298-308; sequence TRASPDSSSCG. The segment covering 311–320 has biased composition (pro residues); that stretch reads SPPPPPPPPS. Residues 328-649 adopt a coiled-coil conformation; the sequence is VLEGKLRDRE…LELEARELAD (322 aa). Residues 447 to 669 form a sufficient for interaction with CTNNB1 region; it reads SGEISLLKQQ…CLEEITATEI (223 aa). The sufficient for interaction with KATNB1 and for inhibition of katanin-mediated microtubule severing stretch occupies residues 450 to 669; the sequence is ISLLKQQLKE…CLEEITATEI (220 aa). Ser-570 bears the Phosphoserine mark. A Nuclear export signal motif is present at residues 631–640; that stretch reads LEQELQQLSL.

It belongs to the LZTS2 family. Interacts with KATNB1. Also interacts with CTNNB1, gamma-tubulin and KIF23. As to expression, highly expressed in prostate and testis, and at slightly lower levels in spleen, thymus, uterus, small intestine and colon.

The protein resides in the cytoplasm. The protein localises to the cytoskeleton. It is found in the microtubule organizing center. It localises to the centrosome. Negative regulator of katanin-mediated microtubule severing and release from the centrosome. Required for central spindle formation and the completion of cytokinesis. May negatively regulate axonal outgrowth by preventing the formation of microtubule bundles that are necessary for transport within the elongating axon. Negative regulator of the Wnt signaling pathway. Represses beta-catenin-mediated transcriptional activation by promoting the nuclear exclusion of beta-catenin. The polypeptide is Leucine zipper putative tumor suppressor 2 (Homo sapiens (Human)).